Here is a 140-residue protein sequence, read N- to C-terminus: Large-conductance mechanosensitive channel (140 aa).

A run of 3 helical transmembrane segments spans residues 7-27, 30-50, and 64-84; these read EFAF…GAAF, IITS…FGTV, and GLFV…FLFV.

The protein belongs to the MscL family. Homopentamer.

The protein resides in the cell membrane. In terms of biological role, channel that opens in response to stretch forces in the membrane lipid bilayer. May participate in the regulation of osmotic pressure changes within the cell. The sequence is that of Large-conductance mechanosensitive channel from Staphylococcus carnosus (strain TM300).